A 246-amino-acid chain; its full sequence is Vacuolar iron transporter 2 (246 aa).

Residues Met-1 to Asp-32 are Cytoplasmic-facing. The chain crosses the membrane as a helical span at residues Ile-33–Gly-53. Topologically, residues Ala-54–Ser-58 are vacuolar. A helical membrane pass occupies residues Ala-59–Gly-79. Residues Gly-80–Ala-164 lie on the Cytoplasmic side of the membrane. The tract at residues Ser-86 to Leu-161 is cytoplasmic metal binding domain (MBD). The Fe cation site is built by Glu-98, Glu-101, Glu-109, Glu-112, Met-145, and Glu-149. Residues Gly-165 to Val-185 traverse the membrane as a helical segment. Residues Pro-186–Arg-190 lie on the Vacuolar side of the membrane. Residues Ala-191–Gly-211 traverse the membrane as a helical segment. Residues Arg-212–Pro-218 lie on the Cytoplasmic side of the membrane. A helical membrane pass occupies residues Phe-219–Met-239. Topologically, residues Ala-240–Ile-246 are vacuolar.

The protein belongs to the CCC1 family. Homodimer. The dimeric interaction is mediated by both the transmembrane domains (TMDs) and the cytoplasmic metal binding domain (MBD). Expressed in leaf sheaths and at lower level in leaf blades.

Its subcellular location is the vacuole membrane. The catalysed reaction is Fe(2+)(in) = Fe(2+)(out). Vacuolar iron transporter involved in the transfer of iron ions from the cytosol to the vacuole for intracellular iron storage. Vacuolar iron storage is required for seed embryo and seedling development. May be involved in the regulation of iron translocation between flag leaves and seeds. Can transport zinc ions from the cytosol to the vacuole. The polypeptide is Vacuolar iron transporter 2 (Oryza sativa subsp. japonica (Rice)).